Reading from the N-terminus, the 245-residue chain is S-methyl-5'-thioinosine phosphorylase (245 aa).

Residues Thr-10 and 52–53 (RH) contribute to the phosphate site. Position 185 (Met-185) interacts with substrate. Thr-186 contacts phosphate. 209 to 211 (NPA) provides a ligand contact to substrate.

It belongs to the PNP/MTAP phosphorylase family. MTAP subfamily. In terms of assembly, homotrimer.

It catalyses the reaction S-methyl-5'-thioinosine + phosphate = 5-(methylsulfanyl)-alpha-D-ribose 1-phosphate + hypoxanthine. Its pathway is purine metabolism; purine nucleoside salvage. Its function is as follows. Catalyzes the reversible phosphorylation of S-methyl-5'-thioinosine (MTI) to hypoxanthine and 5-methylthioribose-1-phosphate. Involved in the breakdown of S-methyl-5'-thioadenosine (MTA), a major by-product of polyamine biosynthesis. Catabolism of (MTA) occurs via deamination to MTI and phosphorolysis to hypoxanthine. Involved in quorum sensing. The chain is S-methyl-5'-thioinosine phosphorylase from Pseudomonas aeruginosa (strain ATCC 15692 / DSM 22644 / CIP 104116 / JCM 14847 / LMG 12228 / 1C / PRS 101 / PAO1).